The primary structure comprises 558 residues: Nucleoprotein (558 aa).

The tract at residues 54–237 (MRKEKRDDKD…ITEQQSSINI (184 aa)) is binding site for the cap structure m7GTP. Mg(2+) contacts are provided by Asp-382 and Glu-384. Residues Asp-382 and Glu-384 each contribute to the Mn(2+) site. Glu-392, Cys-499, His-502, and Cys-518 together coordinate Zn(2+). Asp-522 serves as a coordination point for Mg(2+). Asp-522 serves as a coordination point for Mn(2+).

Belongs to the arenaviridae nucleocapsid protein family. Homomultimerizes to form the nucleocapsid. Binds to viral genomic RNA. Interacts with glycoprotein G2. Interacts with protein Z; this interaction probably directs the encapsidated genome to budding sites. Interacts with protein L; this interaction does not interfere with Z-L interaction. Interacts with host IKBKE (via Protein kinase domain); the interaction inhibits IKBKE kinase activity.

It is found in the virion. The protein localises to the host cytoplasm. In terms of biological role, encapsidates the genome, protecting it from nucleases. The encapsidated genomic RNA is termed the nucleocapsid (NC). Serves as template for viral transcription and replication. The increased presence of protein N in host cell does not seem to trigger the switch from transcription to replication as observed in other negative strain RNA viruses. Through the interaction with host IKBKE, strongly inhibits the phosphorylation and nuclear translocation of host IRF3, a protein involved in interferon activation pathway, leading to the inhibition of interferon-beta and IRF3-dependent promoters activation. Also encodes a functional 3'-5' exoribonuclease that degrades preferentially dsRNA substrates and thereby participates in the suppression of interferon induction. This Lymphocytic choriomeningitis virus (strain Armstrong) (LCMV) protein is Nucleoprotein.